A 92-amino-acid chain; its full sequence is Large ribosomal subunit protein bL36m (92 aa).

The transit peptide at 1 to 54 directs the protein to the mitochondrion; the sequence is MASLGRKFFAVGVLSRVFPSAFNAQKGLLKNASMFLTPAFRLSPSLLPWNFSRG.

It belongs to the bacterial ribosomal protein bL36 family. Component of the mitochondrial large ribosomal subunit (mt-LSU). Mature yeast 74S mitochondrial ribosomes consist of a small (37S) and a large (54S) subunit. The 37S small subunit contains a 15S ribosomal RNA (15S mt-rRNA) and at least 32 different proteins. The 54S large subunit contains a 21S rRNA (21S mt-rRNA) and at least 45 different proteins. bL36m has a zinc binding site.

The protein localises to the mitochondrion. Functionally, component of the mitochondrial ribosome (mitoribosome), a dedicated translation machinery responsible for the synthesis of mitochondrial genome-encoded proteins, including at least some of the essential transmembrane subunits of the mitochondrial respiratory chain. The mitoribosomes are attached to the mitochondrial inner membrane and translation products are cotranslationally integrated into the membrane. bL36m may be involved in a process influencing telomere capping. This Schizosaccharomyces pombe (strain 972 / ATCC 24843) (Fission yeast) protein is Large ribosomal subunit protein bL36m (rtc6).